Here is a 156-residue protein sequence, read N- to C-terminus: Small ribosomal subunit protein uS7 (156 aa).

This sequence belongs to the universal ribosomal protein uS7 family. In terms of assembly, part of the 30S ribosomal subunit. Contacts proteins S9 and S11.

Its function is as follows. One of the primary rRNA binding proteins, it binds directly to 16S rRNA where it nucleates assembly of the head domain of the 30S subunit. Is located at the subunit interface close to the decoding center, probably blocks exit of the E-site tRNA. The chain is Small ribosomal subunit protein uS7 from Alkaliphilus oremlandii (strain OhILAs) (Clostridium oremlandii (strain OhILAs)).